The chain runs to 340 residues: Tryptophan--tRNA ligase (340 aa).

ATP-binding positions include 11-13 (RPT) and 19-20 (GH). The 'HIGH' region motif lies at 12 to 20 (PTGKLHLGH). Asp140 contributes to the L-tryptophan binding site. ATP contacts are provided by residues 152–154 (GND), Leu194, and 202–206 (KMSKS). A 'KMSKS' region motif is present at residues 202–206 (KMSKS).

The protein belongs to the class-I aminoacyl-tRNA synthetase family. In terms of assembly, homodimer.

It localises to the cytoplasm. It carries out the reaction tRNA(Trp) + L-tryptophan + ATP = L-tryptophyl-tRNA(Trp) + AMP + diphosphate + H(+). In terms of biological role, catalyzes the attachment of tryptophan to tRNA(Trp). This is Tryptophan--tRNA ligase from Streptococcus pyogenes serotype M3 (strain ATCC BAA-595 / MGAS315).